A 391-amino-acid polypeptide reads, in one-letter code: Putative penicillin-binding protein PbpX (391 aa).

A helical transmembrane segment spans residues 21–40 (GKLLFGLLAVMVCITIWNAL). The segment at 44 to 76 (SEENEPSQETAAVSNTDQKKEVKKKTAKKSEEQ) is disordered. Over residues 50–59 (SQETAAVSNT) the composition is skewed to polar residues.

It belongs to the beta-lactamase family.

The protein resides in the cell membrane. This Bacillus subtilis (strain 168) protein is Putative penicillin-binding protein PbpX (pbpX).